A 372-amino-acid polypeptide reads, in one-letter code: Serine/threonine-protein kinase 17B (372 aa).

In terms of domain architecture, Protein kinase spans 33 to 293 (TLTPKELGRG…AESCLSHSWL (261 aa)). ATP-binding positions include 39–47 (LGRGKFAVV) and lysine 62. Residue aspartate 158 is the Proton acceptor of the active site. Positions 305-348 (EETSGSSQIQDLTLRSSEEKTSKSSCNGSCGAREDKENIPEDGS) are disordered. Positions 307–319 (TSGSSQIQDLTLR) are enriched in polar residues.

This sequence belongs to the protein kinase superfamily. CAMK Ser/Thr protein kinase family. DAP kinase subfamily. In terms of assembly, interacts with CHP1; the interaction induces CHP1 to translocate from the Golgi to the nucleus. In terms of processing, autophosphorylated.

The protein resides in the nucleus. The protein localises to the cell membrane. Its subcellular location is the endoplasmic reticulum-Golgi intermediate compartment. It catalyses the reaction L-seryl-[protein] + ATP = O-phospho-L-seryl-[protein] + ADP + H(+). The enzyme catalyses L-threonyl-[protein] + ATP = O-phospho-L-threonyl-[protein] + ADP + H(+). Functionally, acts as a positive regulator of apoptosis. Phosphorylates myosin light chains. This is Serine/threonine-protein kinase 17B (Stk17b) from Mus musculus (Mouse).